A 427-amino-acid polypeptide reads, in one-letter code: Enolase (427 aa).

Residue glutamine 163 participates in (2R)-2-phosphoglycerate binding. The active-site Proton donor is glutamate 205. Positions 242, 285, and 312 each coordinate Mg(2+). Positions 337, 366, 367, and 388 each coordinate (2R)-2-phosphoglycerate. Lysine 337 acts as the Proton acceptor in catalysis.

This sequence belongs to the enolase family. The cofactor is Mg(2+).

It is found in the cytoplasm. The protein resides in the secreted. Its subcellular location is the cell surface. The enzyme catalyses (2R)-2-phosphoglycerate = phosphoenolpyruvate + H2O. The protein operates within carbohydrate degradation; glycolysis; pyruvate from D-glyceraldehyde 3-phosphate: step 4/5. Functionally, catalyzes the reversible conversion of 2-phosphoglycerate (2-PG) into phosphoenolpyruvate (PEP). It is essential for the degradation of carbohydrates via glycolysis. In Burkholderia orbicola (strain MC0-3), this protein is Enolase.